A 167-amino-acid chain; its full sequence is MHPILEAFWYILPAYFANSSPVILGGGTPIDFGKTWRDGRRIFGDSKTWRGFLGGLTVGTLIGVIQQIIYPYYPSLSLAFKVSFLLALGALVGDLIGSFIKRRLNLPPGYPAVGLDQWGFLISALCFAYPVHTIPTGEVLLLLVVTPLIHWGTNVLAYKMKWKSVPW.

5 helical membrane-spanning segments follow: residues 4–24 (ILEA…PVIL), 51–71 (GFLG…IIYP), 80–100 (FKVS…GSFI), 104–124 (LNLP…LISA), and 139–158 (VLLL…VLAY).

The protein belongs to the CDP-archaeol synthase family. It depends on Mg(2+) as a cofactor.

The protein resides in the cell membrane. The catalysed reaction is 2,3-bis-O-(geranylgeranyl)-sn-glycerol 1-phosphate + CTP + H(+) = CDP-2,3-bis-O-(geranylgeranyl)-sn-glycerol + diphosphate. The protein operates within membrane lipid metabolism; glycerophospholipid metabolism. In terms of biological role, catalyzes the formation of CDP-2,3-bis-(O-geranylgeranyl)-sn-glycerol (CDP-archaeol) from 2,3-bis-(O-geranylgeranyl)-sn-glycerol 1-phosphate (DGGGP) and CTP. This reaction is the third ether-bond-formation step in the biosynthesis of archaeal membrane lipids. The polypeptide is CDP-archaeol synthase (Pyrococcus furiosus (strain ATCC 43587 / DSM 3638 / JCM 8422 / Vc1)).